The chain runs to 206 residues: Ribonuclease HII (206 aa).

The RNase H type-2 domain maps to M1–Q206. D7, E8, and D105 together coordinate a divalent metal cation.

The protein belongs to the RNase HII family. Mn(2+) serves as cofactor. The cofactor is Mg(2+).

It localises to the cytoplasm. The enzyme catalyses Endonucleolytic cleavage to 5'-phosphomonoester.. Functionally, endonuclease that specifically degrades the RNA of RNA-DNA hybrids. The sequence is that of Ribonuclease HII (rnhB) from Methanothermobacter thermautotrophicus (strain ATCC 29096 / DSM 1053 / JCM 10044 / NBRC 100330 / Delta H) (Methanobacterium thermoautotrophicum).